The following is an 83-amino-acid chain: ATP synthase subunit 9, mitochondrial (83 aa).

Transmembrane regions (helical) follow at residues 8 to 28 and 45 to 72; these read IGAG…GNVL and SFGY…LISS.

This sequence belongs to the ATPase C chain family. F-type ATPases have 2 components, CF(1) - the catalytic core - and CF(0) - the membrane proton channel. CF(1) has five subunits: alpha(3), beta(3), gamma(1), delta(1), epsilon(1). CF(0) has three main subunits: a, b and c.

It is found in the mitochondrion membrane. This protein is one of the chains of the nonenzymatic membrane component (F0) of mitochondrial ATPase. This is ATP synthase subunit 9, mitochondrial (ATP9) from Helianthus annuus (Common sunflower).